Reading from the N-terminus, the 126-residue chain is UPF0538 protein C2orf76 homolog (126 aa).

It belongs to the UPF0538 family.

This Bos taurus (Bovine) protein is UPF0538 protein C2orf76 homolog.